The following is a 500-amino-acid chain: L-arabinose isomerase (500 aa).

Mn(2+) is bound by residues Glu306, Glu333, His350, and His450.

The protein belongs to the arabinose isomerase family. In terms of assembly, homohexamer. Mn(2+) is required as a cofactor.

It carries out the reaction beta-L-arabinopyranose = L-ribulose. The protein operates within carbohydrate degradation; L-arabinose degradation via L-ribulose; D-xylulose 5-phosphate from L-arabinose (bacterial route): step 1/3. Its function is as follows. Catalyzes the conversion of L-arabinose to L-ribulose. This Salmonella arizonae (strain ATCC BAA-731 / CDC346-86 / RSK2980) protein is L-arabinose isomerase.